We begin with the raw amino-acid sequence, 149 residues long: UPF0251 protein Moth_1655 (149 aa).

Residues 129–149 are disordered; the sequence is AGRGPGRGRCHRHGRFGEGEH.

This sequence belongs to the UPF0251 family.

This Moorella thermoacetica (strain ATCC 39073 / JCM 9320) protein is UPF0251 protein Moth_1655.